Consider the following 391-residue polypeptide: Elongation factor Tu (391 aa).

Positions lysine 10–glutamate 201 constitute a tr-type G domain. Residues glycine 19 to threonine 26 are G1. A GTP-binding site is contributed by glycine 19–threonine 26. Threonine 26 provides a ligand contact to Mg(2+). The tract at residues glycine 55–serine 59 is G2. The segment at aspartate 76–glycine 79 is G3. GTP is bound by residues aspartate 76–histidine 80 and asparagine 131–aspartate 134. A G4 region spans residues asparagine 131–aspartate 134. The tract at residues serine 169–leucine 171 is G5.

It belongs to the TRAFAC class translation factor GTPase superfamily. Classic translation factor GTPase family. EF-Tu/EF-1A subfamily. Monomer.

It is found in the cytoplasm. The catalysed reaction is GTP + H2O = GDP + phosphate + H(+). Functionally, GTP hydrolase that promotes the GTP-dependent binding of aminoacyl-tRNA to the A-site of ribosomes during protein biosynthesis. This chain is Elongation factor Tu, found in Rhizobium meliloti (strain 1021) (Ensifer meliloti).